The primary structure comprises 735 residues: MDDLTLLDLLECPVCFEKLDVTAKVLPCQHTFCKPCLQRIFKAHKELRCPECRTLVFCSIEALPANLLLVRLLDGVRSGHNSWRGGSFRRPRILTLQDNRKAKSSPRSLQASPFRLGPTVRIHMDGVPRAKALCNYRGKNPGDLKFNKGDVILLQRQLDENWYQGEINGVSGFFPASSVEVIKQLPQPPPLCRALYNFDLRDKDKSENQDCLTFLKDDVITVISRVDENWAEGKLGDKVGIFPILFVEPNLSARHLLEKSKGHQLSRTKHLSLMSSPSRGKATNTSTLRKSPGSRRKGSGQFAMTTALNTLNRMVHSPEGHQMVEISTPVLISSTSPSMLTQHGDRADFPASSAGQVSTSHPAPASPGHSTAMVSVPSSQQHLSTNMFVALHTYSAQGPEELDLKKGEGIRVLGKNQDGWLRGVSLVTGRTGIFPSDYVIPVFSSTARKTSSFPDSRHPTVCTTWALSTSSVSSQGSFSEGDPRQSGPFRSVFVPTAVNPPRSTSGPGTSGQGSLRKVRSSMRKNGSLQRPVQSGIPTFMVGSLRCSPAMVIRPQKFQFYQPQGMTPSPTPIMVEIGSKSISTGEPALTCINRGGKTRTHSAGNSIIMEGKETPIKSEPPPKPPASAPPSILVKPENSKNGIEKQVKTVRFQNYSPPPTKHSASGPTSGKHEQPATLKGSQPEAVSSEGEMTILFAHRSGCHSGQQTDLRRKSAFSKTTPPVSTASVSQTLFPSK.

The RING-type zinc-finger motif lies at 12–53 (CPVCFEKLDVTAKVLPCQHTFCKPCLQRIFKAHKELRCPECR). 2 SH3 domains span residues 125–184 (DGVP…VIKQ) and 187–252 (QPPP…PNLS). Disordered stretches follow at residues 260–301 (SKGH…GSGQ) and 335–373 (TSPS…STAM). Residues 273–289 (LMSSPSRGKATNTSTLR) are compositionally biased toward polar residues. The interval 373 to 466 (MVSVPSSQQH…RHPTVCTTWA (94 aa)) is interaction with PAK4. Residues 383 to 444 (LSTNMFVALH…PSDYVIPVFS (62 aa)) form the SH3 3 domain. Disordered stretches follow at residues 472-534 (VSSQ…PVQS), 612-637 (ETPI…KPEN), and 649-735 (VRFQ…FPSK). Over residues 523 to 534 (RKNGSLQRPVQS) the composition is skewed to polar residues. Over residues 617–627 (SEPPPKPPASA) the composition is skewed to pro residues. Positions 647–652 (KTVRFQ) are interaction with PPP1CA. Position 655 is a phosphoserine (S655). Residues 715 to 735 (FSKTTPPVSTASVSQTLFPSK) are compositionally biased toward polar residues.

This sequence belongs to the SH3RF family. Interacts with FASLG and PPP1CA. Interacts with PAK4 and TNFRSF1A. Interacts with DLK1, MAP3K10, MAPK8IP1/JIP1, MAPK8IP2/JIP2 and MAPK8IP3/JIP3. Interacts with RAC1 (both active GTP- or inactive GDP-bound forms). Post-translationally, autoubiquitinated.

The protein resides in the nucleus. The enzyme catalyses S-ubiquitinyl-[E2 ubiquitin-conjugating enzyme]-L-cysteine + [acceptor protein]-L-lysine = [E2 ubiquitin-conjugating enzyme]-L-cysteine + N(6)-ubiquitinyl-[acceptor protein]-L-lysine.. It functions in the pathway protein modification; protein ubiquitination. In terms of biological role, has E3 ubiquitin-protein ligase activity. Acts as an anti-apoptotic regulator of the JNK pathway by ubiquitinating and promoting the degradation of SH3RF1, a scaffold protein that is required for pro-apoptotic JNK activation. Facilitates TNF-alpha-mediated recruitment of adapter proteins TRADD and RIPK1 to TNFRSF1A and regulates PAK4 protein stability via inhibition of its ubiquitin-mediated proteasomal degradation. Inhibits PPP1CA phosphatase activity. The polypeptide is E3 ubiquitin-protein ligase SH3RF2 (Sh3rf2) (Rattus norvegicus (Rat)).